We begin with the raw amino-acid sequence, 37 residues long: uncharacterized protein (37 aa).

The helical transmembrane segment at 16-36 threads the bilayer; sequence FALIVVLFILLIIVGTAFVGG.

Belongs to the SscA family.

The protein localises to the membrane. This is an uncharacterized protein from Bacillus subtilis (strain 168).